We begin with the raw amino-acid sequence, 1130 residues long: Sterol regulatory element-binding protein 2 (1130 aa).

The segment at 1–50 is transcriptional activation (acidic); it reads MDESSELGVLETMETLTELGDELTLGDIDEMLQFVSNQVGEFPDLFSEQL. Residues 1 to 470 lie on the Cytoplasmic side of the membrane; it reads MDESSELGVL…VALGMVDRSR (470 aa). The segment at 53–133 is disordered; that stretch reads SFPGGGSNGG…PQPQPQPPAQ (81 aa). Residues 55 to 64 show a composition bias toward gly residues; the sequence is PGGGSNGGSG. The span at 83 to 93 shows a compositional bias: polar residues; it reads RSFSQVPLSTF. The segment covering 94–104 has biased composition (low complexity); that stretch reads SPSAASPQAPA. Over residues 111–131 the composition is skewed to pro residues; sequence PTPPRATPVLQPRPQPQPQPP. The segment at 226-480 is interaction with LMNA; sequence QQVPVLVQPQ…ILLCVLTFLG (255 aa). The 51-residue stretch at 319–369 folds into the bHLH domain; that stretch reads ERRTTHNIIEKRYRSSINDKIIELKDLVMGTDAKMHKSGVLRKAIDYIKYL. The interval 369–390 is leucine-zipper; sequence LQQVNHKLRQENMVLKLANQKN. A Glycyl lysine isopeptide (Lys-Gly) (interchain with G-Cter in SUMO2) cross-link involves residue Lys453. A helical membrane pass occupies residues 471–491; it reads ILLCVLTFLGLSFNPLTSLLQ. The Lumenal segment spans residues 492-522; that stretch reads WGGAHNTDQHPYSGSGRSVLSLESGAGGWFD. Residues 523–543 form a helical membrane-spanning segment; that stretch reads WMVPTLLLWLVNGVIVLSVFV. Residues 544–1130 are Cytoplasmic-facing; it reads KLLVHGEPVI…LGGGTAIAAS (587 aa). A Phosphoserine modification is found at Ser1087.

The protein belongs to the SREBP family. As to quaternary structure, forms a tight complex with SCAP, the SCAP-SREBP complex, in the endoplasmic reticulum membrane and the Golgi apparatus. Interacts with PAQR3; the interaction anchors the SCAP-SREBP complex to the Golgi apparatus in low cholesterol conditions. Interacts (via C-terminal domain) with RNF139. In terms of assembly, homodimer; efficient DNA binding of the soluble transcription factor fragment requires dimerization with another bHLH protein. Interacts with LMNA. In terms of processing, processed in the Golgi apparatus, releasing the protein from the membrane. At low cholesterol the SCAP-SREBP complex is recruited into COPII vesicles for export from the endoplasmic reticulum. In the Golgi, complex SREBPs are cleaved sequentially by site-1 (MBTPS1, S1P) and site-2 (MBTPS2, S2P) proteases. The first cleavage by site-1 protease occurs within the luminal loop, the second cleavage by site-2 protease occurs within the first transmembrane domain, releasing the transcription factor from the Golgi membrane. Apoptosis triggers cleavage by the cysteine proteases caspase-3 and caspase-7. Cleavage and activation is induced by mediated cholesterol efflux. Post-translationally, phosphorylated by AMPK, leading to suppress protein processing and nuclear translocation, and repress target gene expression. SCAP-free SREBF2 is ubiquitinated by the BCR(ARMC5) complex, leading to its degradation. In terms of processing, ubiquitinated; the nuclear form has a rapid turnover and is rapidly ubiquitinated and degraded by the proteasome in the nucleus.

The protein localises to the endoplasmic reticulum membrane. Its subcellular location is the golgi apparatus membrane. The protein resides in the cytoplasmic vesicle. It localises to the COPII-coated vesicle membrane. It is found in the nucleus. Its activity is regulated as follows. Activation by cleavage is down-regulated upon activation of SIRT3-dependent PRKAA1/AMPK-alpha signaling cascade which leads to inhibition of ATP-consuming lipogenesis to restore cellular energy balance. In terms of biological role, precursor of the transcription factor form (Processed sterol regulatory element-binding protein 2), which is embedded in the endoplasmic reticulum membrane. Low sterol concentrations promote processing of this form, releasing the transcription factor form that translocates into the nucleus and activates transcription of genes involved in cholesterol biosynthesis. Functionally, key transcription factor that regulates expression of genes involved in cholesterol biosynthesis. Binds to the sterol regulatory element 1 (SRE-1) (5'-ATCACCCCAC-3'). Has dual sequence specificity binding to both an E-box motif (5'-ATCACGTGA-3') and to SRE-1 (5'-ATCACCCCAC-3'). Regulates transcription of genes related to cholesterol synthesis pathway. The protein is Sterol regulatory element-binding protein 2 of Mus musculus (Mouse).